The sequence spans 504 residues: 2,3-bisphosphoglycerate-independent phosphoglycerate mutase (504 aa).

2 residues coordinate Mn(2+): Asp-11 and Ser-61. Ser-61 (phosphoserine intermediate) is an active-site residue. Residues His-122, 152–153 (RD), Arg-183, Arg-189, 255–258 (RNDR), and Lys-329 contribute to the substrate site. Mn(2+) contacts are provided by Asp-396, His-400, Asp-437, His-438, and His-455.

It belongs to the BPG-independent phosphoglycerate mutase family. In terms of assembly, monomer. It depends on Mn(2+) as a cofactor.

The enzyme catalyses (2R)-2-phosphoglycerate = (2R)-3-phosphoglycerate. It participates in carbohydrate degradation; glycolysis; pyruvate from D-glyceraldehyde 3-phosphate: step 3/5. Its function is as follows. Catalyzes the interconversion of 2-phosphoglycerate and 3-phosphoglycerate. This chain is 2,3-bisphosphoglycerate-independent phosphoglycerate mutase, found in Bacteroides fragilis (strain ATCC 25285 / DSM 2151 / CCUG 4856 / JCM 11019 / LMG 10263 / NCTC 9343 / Onslow / VPI 2553 / EN-2).